The sequence spans 533 residues: Beta-1,4 N-acetylgalactosaminyltransferase 1 (533 aa).

Residues Met-1 to Ala-7 are Cytoplasmic-facing. The helical; Signal-anchor for type II membrane protein transmembrane segment at Leu-8–Ala-25 threads the bilayer. Topologically, residues Ser-26–Gln-533 are lumenal. Residues Asn-79, Asn-179, and Asn-274 are each glycosylated (N-linked (GlcNAc...) asparagine). Residues Cys-429 and Cys-476 are joined by a disulfide bond.

It belongs to the glycosyltransferase 2 family. Homodimer; disulfide-linked.

Its subcellular location is the golgi apparatus membrane. It catalyses the reaction a ganglioside GM3 (d18:1(4E)) + UDP-N-acetyl-alpha-D-galactosamine = a ganglioside GM2 (d18:1(4E)) + UDP + H(+). The catalysed reaction is a ganglioside GM3 + UDP-N-acetyl-alpha-D-galactosamine = a ganglioside GM2 + UDP + H(+). The enzyme catalyses a ganglioside GD3 + UDP-N-acetyl-alpha-D-galactosamine = a ganglioside GD2 + UDP + H(+). It carries out the reaction a ganglioside GD3 (d18:1(4E)) + UDP-N-acetyl-alpha-D-galactosamine = a ganglioside GD2 (d18:1(4E)) + UDP + H(+). It catalyses the reaction a beta-D-Gal-(1-&gt;4)-beta-D-Glc-(1&lt;-&gt;1)-Cer(d18:1(4E)) + UDP-N-acetyl-alpha-D-galactosamine = a ganglioside GA2 (d18:1(4E)) + UDP + H(+). The catalysed reaction is a ganglioside GD1a + UDP-N-acetyl-alpha-D-galactosamine = a ganglioside GalNAc-GD1a + UDP + H(+). The enzyme catalyses a ganglioside GT3 (d18:1(4E)) + UDP-N-acetyl-alpha-D-galactosamine = a ganglioside GT2 (d18:1(4E)) + UDP + H(+). It carries out the reaction a beta-D-galactosyl-(1-&gt;4)-beta-D-glucosyl-(1&lt;-&gt;1)-ceramide + UDP-N-acetyl-alpha-D-galactosamine = a ganglioside GA2 + UDP + H(+). It catalyses the reaction a neolactoside IV(3)-alpha-NeuGc-nLc4Cer + UDP-N-acetyl-alpha-D-galactosamine = a neolactoside IV(4)-beta-GalNAc-IV(3)-alpha-NeuGc-nLc4Cer + UDP + H(+). The protein operates within sphingolipid metabolism. In terms of biological role, involved in the biosynthesis of gangliosides GM2, GD2, GT2 and GA2 from GM3, GD3, GT3 and GA3, respectively. In Homo sapiens (Human), this protein is Beta-1,4 N-acetylgalactosaminyltransferase 1.